The following is a 331-amino-acid chain: L-lactate dehydrogenase A chain (331 aa).

NAD(+) is bound by residues 29–57 (GMVG…MEDK) and arginine 98. Residues arginine 105, asparagine 137, and arginine 168 each coordinate substrate. Asparagine 137 contributes to the NAD(+) binding site. Histidine 192 serves as the catalytic Proton acceptor. Threonine 247 serves as a coordination point for substrate.

Belongs to the LDH/MDH superfamily. LDH family. As to quaternary structure, homotetramer.

The protein localises to the cytoplasm. The enzyme catalyses (S)-lactate + NAD(+) = pyruvate + NADH + H(+). It participates in fermentation; pyruvate fermentation to lactate; (S)-lactate from pyruvate: step 1/1. In terms of biological role, interconverts simultaneously and stereospecifically pyruvate and lactate with concomitant interconversion of NADH and NAD(+). This chain is L-lactate dehydrogenase A chain (ldha), found in Dissostichus mawsoni (Antarctic cod).